The following is a 512-amino-acid chain: 2-isopropylmalate synthase (512 aa).

One can recognise a Pyruvate carboxyltransferase domain in the interval 5–267 (LYIFDTTLRD…DSRVDATQIV (263 aa)). Mn(2+) contacts are provided by aspartate 14, histidine 202, histidine 204, and asparagine 238. The segment at 393-512 (KLVSLKVVSE…EEKMNAQAAA (120 aa)) is regulatory domain.

Belongs to the alpha-IPM synthase/homocitrate synthase family. LeuA type 1 subfamily. As to quaternary structure, homodimer. It depends on Mn(2+) as a cofactor.

The protein localises to the cytoplasm. It catalyses the reaction 3-methyl-2-oxobutanoate + acetyl-CoA + H2O = (2S)-2-isopropylmalate + CoA + H(+). It participates in amino-acid biosynthesis; L-leucine biosynthesis; L-leucine from 3-methyl-2-oxobutanoate: step 1/4. Its function is as follows. Catalyzes the condensation of the acetyl group of acetyl-CoA with 3-methyl-2-oxobutanoate (2-ketoisovalerate) to form 3-carboxy-3-hydroxy-4-methylpentanoate (2-isopropylmalate). This chain is 2-isopropylmalate synthase, found in Chromobacterium violaceum (strain ATCC 12472 / DSM 30191 / JCM 1249 / CCUG 213 / NBRC 12614 / NCIMB 9131 / NCTC 9757 / MK).